Reading from the N-terminus, the 338-residue chain is Nicotinate-nucleotide--dimethylbenzimidazole phosphoribosyltransferase (338 aa).

Glu305 (proton acceptor) is an active-site residue.

The protein belongs to the CobT family.

The enzyme catalyses 5,6-dimethylbenzimidazole + nicotinate beta-D-ribonucleotide = alpha-ribazole 5'-phosphate + nicotinate + H(+). Its pathway is nucleoside biosynthesis; alpha-ribazole biosynthesis; alpha-ribazole from 5,6-dimethylbenzimidazole: step 1/2. In terms of biological role, catalyzes the synthesis of alpha-ribazole-5'-phosphate from nicotinate mononucleotide (NAMN) and 5,6-dimethylbenzimidazole (DMB). The protein is Nicotinate-nucleotide--dimethylbenzimidazole phosphoribosyltransferase of Sinorhizobium fredii (strain NBRC 101917 / NGR234).